A 415-amino-acid chain; its full sequence is G-protein coupled receptor daf-38 (415 aa).

Over residues 1–19 the composition is skewed to low complexity; that stretch reads MLLPSNLTTSTLMTSSSES. A disordered region spans residues 1 to 25; it reads MLLPSNLTTSTLMTSSSESYDADNP. At 1–35 the chain is on the extracellular side; it reads MLLPSNLTTSTLMTSSSESYDADNPGLPPEPILSD. The helical transmembrane segment at 36-56 threads the bilayer; sequence YVEMFTLVLNFIVGAPLNLAA. Residues 57–75 are Cytoplasmic-facing; sequence YTQLSERPTSTRLDLLKRS. A helical transmembrane segment spans residues 76–96; that stretch reads LNYSDLLVLFIYVPSRACWLL. Residues 97–108 lie on the Extracellular side of the membrane; sequence TYDWRGGDALCK. A disulfide bond links Cys-107 and Cys-187. The helical transmembrane segment at 109-129 threads the bilayer; that stretch reads IVKMFHTFAFQSSSNVIVCIA. Residues 130–152 lie on the Cytoplasmic side of the membrane; it reads VDRLLSVLSPSHHSPNKALKRTK. A helical membrane pass occupies residues 153-173; that stretch reads MMLIVAWIVALVISCPQLFIW. The Extracellular segment spans residues 174 to 222; the sequence is KAYLALPEYNWSQCLQIWEIARMEKFNKPQVVPEFDAEFWYSILHISLV. The chain crosses the membrane as a helical span at residues 223–243; sequence FWIPCIIIMLSYIIVISWVWI. Topologically, residues 244-345 are cytoplasmic; that stretch reads NSRPSIRHTS…NLNRSRALRV (102 aa). Residues 346–366 traverse the membrane as a helical segment; sequence SLLLVVAYIICWLPYNLISLI. The Extracellular segment spans residues 367 to 382; the sequence is QFLDRDFFSSYLKHVH. The chain crosses the membrane as a helical span at residues 383 to 403; sequence FCQQLIIFNSVVNPWLYGFFG. Over 404 to 415 the chain is Cytoplasmic; it reads PRRPSTTGAGRH.

The protein belongs to the G-protein coupled receptor 1 family. Heterodimer; with daf-37. In terms of tissue distribution, expressed in the ASI and ASK chemosensory neurons and in the IL-2 interneurons, but weakly expressed in other head neurons in hermaphrodites.

The protein localises to the cell membrane. Functionally, G-protein coupled receptor (GPCR) that forms a heterodimer with daf-37 to control dauer formation and behavior. Required for the response to dauer inducing pheromones such as the ascarosides ascr#2, ascr#3 and ascr#5. The sequence is that of G-protein coupled receptor daf-38 from Caenorhabditis elegans.